Reading from the N-terminus, the 294-residue chain is Acetyl-coenzyme A carboxylase carboxyl transferase subunit beta (294 aa).

In terms of domain architecture, CoA carboxyltransferase N-terminal spans Val25–His294. 4 residues coordinate Zn(2+): Cys29, Cys32, Cys48, and Cys51. The segment at Cys29–Cys51 adopts a C4-type zinc-finger fold.

It belongs to the AccD/PCCB family. As to quaternary structure, acetyl-CoA carboxylase is a heterohexamer composed of biotin carboxyl carrier protein (AccB), biotin carboxylase (AccC) and two subunits each of ACCase subunit alpha (AccA) and ACCase subunit beta (AccD). Requires Zn(2+) as cofactor.

Its subcellular location is the cytoplasm. The catalysed reaction is N(6)-carboxybiotinyl-L-lysyl-[protein] + acetyl-CoA = N(6)-biotinyl-L-lysyl-[protein] + malonyl-CoA. It participates in lipid metabolism; malonyl-CoA biosynthesis; malonyl-CoA from acetyl-CoA: step 1/1. Functionally, component of the acetyl coenzyme A carboxylase (ACC) complex. Biotin carboxylase (BC) catalyzes the carboxylation of biotin on its carrier protein (BCCP) and then the CO(2) group is transferred by the transcarboxylase to acetyl-CoA to form malonyl-CoA. This chain is Acetyl-coenzyme A carboxylase carboxyl transferase subunit beta, found in Aliivibrio fischeri (strain MJ11) (Vibrio fischeri).